A 308-amino-acid polypeptide reads, in one-letter code: Mycothiol acetyltransferase (308 aa).

Residues 1–20 are disordered; the sequence is MTSDDTAQPSGARRIETRPD. N-acetyltransferase domains lie at 15 to 152 and 165 to 308; these read IETR…RSLT and VTVR…RSET. Residue glutamate 47 participates in 1D-myo-inositol 2-(L-cysteinylamino)-2-deoxy-alpha-D-glucopyranoside binding. 91-93 provides a ligand contact to acetyl-CoA; sequence LVV. 1D-myo-inositol 2-(L-cysteinylamino)-2-deoxy-alpha-D-glucopyranoside contacts are provided by glutamate 192, lysine 231, and glutamate 240. Residues 244-246 and 251-257 contribute to the acetyl-CoA site; these read VGV and QGGGLGK. A 1D-myo-inositol 2-(L-cysteinylamino)-2-deoxy-alpha-D-glucopyranoside-binding site is contributed by tyrosine 278.

It belongs to the acetyltransferase family. MshD subfamily. In terms of assembly, monomer.

It carries out the reaction 1D-myo-inositol 2-(L-cysteinylamino)-2-deoxy-alpha-D-glucopyranoside + acetyl-CoA = mycothiol + CoA + H(+). Functionally, catalyzes the transfer of acetyl from acetyl-CoA to desacetylmycothiol (Cys-GlcN-Ins) to form mycothiol. This chain is Mycothiol acetyltransferase, found in Streptomyces scabiei (strain 87.22).